We begin with the raw amino-acid sequence, 486 residues long: Keratin-3, type I cytoskeletal 51 kDa (486 aa).

A head region spans residues Met1–Asn125. The interval Glu126–Trp161 is coil 1A. In terms of domain architecture, IF rod spans Glu126 to Pro442. The tract at residues Tyr162–Met184 is linker 1. The tract at residues Ile185–Met276 is coil 1B. The tract at residues Gln277–Ile299 is linker 12. The tract at residues Leu300–Asp438 is coil 2. A disordered region spans residues Leu435–Arg466. Positions Leu439–Met486 are tail. Low complexity predominate over residues Ser449 to Thr461.

It belongs to the intermediate filament family. In terms of assembly, heterotetramer of two type I and two type II keratins.

The chain is Keratin-3, type I cytoskeletal 51 kDa from Xenopus laevis (African clawed frog).